The primary structure comprises 314 residues: Malate dehydrogenase (314 aa).

NAD(+) contacts are provided by residues 7–13 (GAAGGIG) and Asp34. Substrate-binding residues include Arg81 and Arg87. NAD(+) is bound by residues Asn94 and 117–119 (ITN). Residues Asn119 and Arg153 each coordinate substrate. The active-site Proton acceptor is His177. Residue Met230 coordinates NAD(+).

This sequence belongs to the LDH/MDH superfamily. MDH type 1 family. In terms of assembly, homodimer.

It catalyses the reaction (S)-malate + NAD(+) = oxaloacetate + NADH + H(+). Catalyzes the reversible oxidation of malate to oxaloacetate. This Glaesserella parasuis serovar 5 (strain SH0165) (Haemophilus parasuis) protein is Malate dehydrogenase.